A 500-amino-acid chain; its full sequence is Glycerol kinase (500 aa).

ADP is bound at residue threonine 16. The ATP site is built by threonine 16 and threonine 17. Residue threonine 16 coordinates sn-glycerol 3-phosphate. Arginine 20 lines the ADP pocket. Residues arginine 86, glutamate 87, tyrosine 138, and aspartate 247 each coordinate sn-glycerol 3-phosphate. The glycerol site is built by arginine 86, glutamate 87, tyrosine 138, aspartate 247, and glutamine 248. ADP contacts are provided by threonine 269 and glycine 312. Residues threonine 269, glycine 312, glutamine 316, and glycine 413 each contribute to the ATP site. 2 residues coordinate ADP: glycine 413 and asparagine 417.

This sequence belongs to the FGGY kinase family.

It catalyses the reaction glycerol + ATP = sn-glycerol 3-phosphate + ADP + H(+). It functions in the pathway polyol metabolism; glycerol degradation via glycerol kinase pathway; sn-glycerol 3-phosphate from glycerol: step 1/1. Inhibited by fructose 1,6-bisphosphate (FBP). Functionally, key enzyme in the regulation of glycerol uptake and metabolism. Catalyzes the phosphorylation of glycerol to yield sn-glycerol 3-phosphate. This chain is Glycerol kinase, found in Rippkaea orientalis (strain PCC 8801 / RF-1) (Cyanothece sp. (strain PCC 8801)).